We begin with the raw amino-acid sequence, 491 residues long: Glutamyl-tRNA(Gln) amidotransferase subunit A (491 aa).

Catalysis depends on charge relay system residues Lys-76 and Ser-154. Ser-178 (acyl-ester intermediate) is an active-site residue.

Belongs to the amidase family. GatA subfamily. In terms of assembly, heterotrimer of A, B and C subunits.

It carries out the reaction L-glutamyl-tRNA(Gln) + L-glutamine + ATP + H2O = L-glutaminyl-tRNA(Gln) + L-glutamate + ADP + phosphate + H(+). Allows the formation of correctly charged Gln-tRNA(Gln) through the transamidation of misacylated Glu-tRNA(Gln) in organisms which lack glutaminyl-tRNA synthetase. The reaction takes place in the presence of glutamine and ATP through an activated gamma-phospho-Glu-tRNA(Gln). The polypeptide is Glutamyl-tRNA(Gln) amidotransferase subunit A (Cereibacter sphaeroides (strain KD131 / KCTC 12085) (Rhodobacter sphaeroides)).